The sequence spans 81 residues: Cell division protein ZapB (81 aa).

Positions 5–81 form a coiled coil; it reads LEVFEKLESK…QALLGRMEEV (77 aa). The interval 43–64 is disordered; the sequence is VQSAQHGREELERENSQLKEQQ. Basic and acidic residues predominate over residues 48–59; the sequence is HGREELERENSQ.

Belongs to the ZapB family. In terms of assembly, homodimer. The ends of the coiled-coil dimer bind to each other, forming polymers. Interacts with FtsZ.

The protein localises to the cytoplasm. Non-essential, abundant cell division factor that is required for proper Z-ring formation. It is recruited early to the divisome by direct interaction with FtsZ, stimulating Z-ring assembly and thereby promoting cell division earlier in the cell cycle. Its recruitment to the Z-ring requires functional FtsA or ZipA. The polypeptide is Cell division protein ZapB (Klebsiella pneumoniae subsp. pneumoniae (strain ATCC 700721 / MGH 78578)).